We begin with the raw amino-acid sequence, 147 residues long: Cyanate hydratase (147 aa).

Residues Arg88, Glu91, and Ser114 contribute to the active site.

This sequence belongs to the cyanase family.

The enzyme catalyses cyanate + hydrogencarbonate + 3 H(+) = NH4(+) + 2 CO2. Functionally, catalyzes the reaction of cyanate with bicarbonate to produce ammonia and carbon dioxide. The chain is Cyanate hydratase from Albidiferax ferrireducens (strain ATCC BAA-621 / DSM 15236 / T118) (Rhodoferax ferrireducens).